The following is a 226-amino-acid chain: ATP synthase F(0) complex subunit a (226 aa).

6 helical membrane passes run 6–26 (FASF…IVLF), 68–88 (WTLM…LGLL), 97–117 (QLSM…ITGF), 138–158 (IPML…ALAV), 164–184 (ITAG…LMSI), and 200–222 (TILE…SLYL).

This sequence belongs to the ATPase A chain family. In terms of assembly, component of the ATP synthase complex composed at least of ATP5F1A/subunit alpha, ATP5F1B/subunit beta, ATP5MC1/subunit c (homooctomer), MT-ATP6/subunit a, MT-ATP8/subunit 8, ATP5ME/subunit e, ATP5MF/subunit f, ATP5MG/subunit g, ATP5MK/subunit k, ATP5MJ/subunit j, ATP5F1C/subunit gamma, ATP5F1D/subunit delta, ATP5F1E/subunit epsilon, ATP5PF/subunit F6, ATP5PB/subunit b, ATP5PD/subunit d, ATP5PO/subunit OSCP. ATP synthase complex consists of a soluble F(1) head domain (subunits alpha(3) and beta(3)) - the catalytic core - and a membrane F(0) domain - the membrane proton channel (subunits c, a, 8, e, f, g, k and j). These two domains are linked by a central stalk (subunits gamma, delta, and epsilon) rotating inside the F1 region and a stationary peripheral stalk (subunits F6, b, d, and OSCP). Interacts with DNAJC30; interaction is direct.

Its subcellular location is the mitochondrion inner membrane. It carries out the reaction H(+)(in) = H(+)(out). In terms of biological role, subunit a, of the mitochondrial membrane ATP synthase complex (F(1)F(0) ATP synthase or Complex V) that produces ATP from ADP in the presence of a proton gradient across the membrane which is generated by electron transport complexes of the respiratory chain. ATP synthase complex consist of a soluble F(1) head domain - the catalytic core - and a membrane F(1) domain - the membrane proton channel. These two domains are linked by a central stalk rotating inside the F(1) region and a stationary peripheral stalk. During catalysis, ATP synthesis in the catalytic domain of F(1) is coupled via a rotary mechanism of the central stalk subunits to proton translocation. With the subunit c (ATP5MC1), forms the proton-conducting channel in the F(0) domain, that contains two crucial half-channels (inlet and outlet) that facilitate proton movement from the mitochondrial intermembrane space (IMS) into the matrix. Protons are taken up via the inlet half-channel and released through the outlet half-channel, following a Grotthuss mechanism. The polypeptide is ATP synthase F(0) complex subunit a (Bos mutus grunniens (Wild yak)).